The sequence spans 150 residues: 3-dehydroquinate dehydratase (150 aa).

The active-site Proton acceptor is Tyr26. Asn77, His83, and Asp90 together coordinate substrate. Catalysis depends on His103, which acts as the Proton donor. Substrate-binding positions include 104 to 105 and Arg114; that span reads LS.

The protein belongs to the type-II 3-dehydroquinase family. As to quaternary structure, homododecamer.

The catalysed reaction is 3-dehydroquinate = 3-dehydroshikimate + H2O. It participates in metabolic intermediate biosynthesis; chorismate biosynthesis; chorismate from D-erythrose 4-phosphate and phosphoenolpyruvate: step 3/7. Catalyzes a trans-dehydration via an enolate intermediate. This Pectobacterium carotovorum subsp. carotovorum (strain PC1) protein is 3-dehydroquinate dehydratase.